The chain runs to 357 residues: Probable cinnamyl alcohol dehydrogenase 2 (357 aa).

Cysteine 47 is a Zn(2+) binding site. Residue serine 49 participates in NADP(+) binding. 7 residues coordinate Zn(2+): histidine 69, glutamate 70, cysteine 100, cysteine 103, cysteine 106, cysteine 114, and cysteine 163. NADP(+) contacts are provided by residues threonine 167, 188 to 193, 211 to 216, threonine 251, glycine 275, and 298 to 300; these read GLGGVG, SSSDKK, and SFI.

The protein belongs to the zinc-containing alcohol dehydrogenase family. In terms of assembly, homodimer. The cofactor is Zn(2+).

The enzyme catalyses (E)-cinnamyl alcohol + NADP(+) = (E)-cinnamaldehyde + NADPH + H(+). It catalyses the reaction (E)-coniferol + NADP(+) = (E)-coniferaldehyde + NADPH + H(+). The catalysed reaction is (E)-sinapyl alcohol + NADP(+) = (E)-sinapaldehyde + NADPH + H(+). It carries out the reaction (E)-4-coumaroyl alcohol + NADP(+) = (E)-4-coumaraldehyde + NADPH + H(+). The enzyme catalyses (E)-caffeyl alcohol + NADP(+) = (E)-caffeyl aldehyde + NADPH + H(+). Its pathway is aromatic compound metabolism; phenylpropanoid biosynthesis. Its function is as follows. Involved in lignin biosynthesis. Catalyzes the final step specific for the production of lignin monomers. Catalyzes the NADPH-dependent reduction of coniferaldehyde, 5-hydroxyconiferaldehyde, sinapaldehyde, 4-coumaraldehyde and caffeyl aldehyde to their respective alcohols. This Picea abies (Norway spruce) protein is Probable cinnamyl alcohol dehydrogenase 2 (CAD2).